A 122-amino-acid chain; its full sequence is Large ribosomal subunit protein uL14 (122 aa).

Belongs to the universal ribosomal protein uL14 family. In terms of assembly, part of the 50S ribosomal subunit. Forms a cluster with proteins L3 and L19. In the 70S ribosome, L14 and L19 interact and together make contacts with the 16S rRNA in bridges B5 and B8.

Its function is as follows. Binds to 23S rRNA. Forms part of two intersubunit bridges in the 70S ribosome. The sequence is that of Large ribosomal subunit protein uL14 from Herpetosiphon aurantiacus (strain ATCC 23779 / DSM 785 / 114-95).